A 362-amino-acid chain; its full sequence is 3-dehydroquinate synthase (362 aa).

NAD(+)-binding positions include 71–76 (DGEQYK), 105–109 (GVIGD), 129–130 (TT), Lys142, Lys151, and 169–172 (CLKT). Zn(2+)-binding residues include Glu184, His247, and His264.

This sequence belongs to the sugar phosphate cyclases superfamily. Dehydroquinate synthase family. Requires Co(2+) as cofactor. It depends on Zn(2+) as a cofactor. The cofactor is NAD(+).

Its subcellular location is the cytoplasm. The enzyme catalyses 7-phospho-2-dehydro-3-deoxy-D-arabino-heptonate = 3-dehydroquinate + phosphate. It functions in the pathway metabolic intermediate biosynthesis; chorismate biosynthesis; chorismate from D-erythrose 4-phosphate and phosphoenolpyruvate: step 2/7. Functionally, catalyzes the conversion of 3-deoxy-D-arabino-heptulosonate 7-phosphate (DAHP) to dehydroquinate (DHQ). This is 3-dehydroquinate synthase from Salmonella agona (strain SL483).